The chain runs to 193 residues: Epididymal-specific lipocalin-12 (193 aa).

An N-terminal signal peptide occupies residues 1 to 19 (MGPWWALWLILTLPQILGG). Residues C88 and C193 are joined by a disulfide bond. N-linked (GlcNAc...) asparagine glycans are attached at residues N143 and N172.

This sequence belongs to the calycin superfamily. Lipocalin family. Monomer.

It is found in the secreted. In terms of biological role, binds all-trans retinoic acid and may act as a retinoid carrier protein within the epididymis. May play a role in male fertility. The protein is Epididymal-specific lipocalin-12 (Lcn12) of Rattus norvegicus (Rat).